A 170-amino-acid polypeptide reads, in one-letter code: Protein SprT (170 aa).

Positions 25–165 constitute a SprT-like domain; it reads SEQFFDRTFA…QYCKGRLEPV (141 aa). His-78 lines the Zn(2+) pocket. Residue Glu-79 is part of the active site. His-82 provides a ligand contact to Zn(2+).

It belongs to the SprT family. The cofactor is Zn(2+).

The protein resides in the cytoplasm. This chain is Protein SprT, found in Actinobacillus succinogenes (strain ATCC 55618 / DSM 22257 / CCUG 43843 / 130Z).